We begin with the raw amino-acid sequence, 320 residues long: Ribose-phosphate pyrophosphokinase 1 (320 aa).

Residues 39-41 (DGE) and 98-99 (RQ) each bind ATP. Positions 132 and 173 each coordinate Mg(2+). Lys196 is an active-site residue. Residues Arg198, Asp224, and 228–232 (DTAGT) each bind D-ribose 5-phosphate.

This sequence belongs to the ribose-phosphate pyrophosphokinase family. Class I subfamily. As to quaternary structure, homohexamer. It depends on Mg(2+) as a cofactor.

It is found in the cytoplasm. It catalyses the reaction D-ribose 5-phosphate + ATP = 5-phospho-alpha-D-ribose 1-diphosphate + AMP + H(+). It participates in metabolic intermediate biosynthesis; 5-phospho-alpha-D-ribose 1-diphosphate biosynthesis; 5-phospho-alpha-D-ribose 1-diphosphate from D-ribose 5-phosphate (route I): step 1/1. Functionally, involved in the biosynthesis of the central metabolite phospho-alpha-D-ribosyl-1-pyrophosphate (PRPP) via the transfer of pyrophosphoryl group from ATP to 1-hydroxyl of ribose-5-phosphate (Rib-5-P). The chain is Ribose-phosphate pyrophosphokinase 1 from Streptococcus pyogenes serotype M1.